We begin with the raw amino-acid sequence, 154 residues long: Putative NADPH-dependent 7-cyano-7-deazaguanine reductase (154 aa).

Residue D52 is the Proton donor of the active site. Residues 67 to 69 (VES) and 86 to 87 (HE) contribute to the substrate site.

It belongs to the GTP cyclohydrolase I family. QueF type 1 subfamily.

The protein resides in the cytoplasm. The enzyme catalyses 7-aminomethyl-7-carbaguanine + 2 NADP(+) = 7-cyano-7-deazaguanine + 2 NADPH + 3 H(+). It functions in the pathway tRNA modification; tRNA-queuosine biosynthesis. In terms of biological role, catalyzes the NADPH-dependent reduction of 7-cyano-7-deazaguanine (preQ0) to 7-aminomethyl-7-deazaguanine (preQ1). The chain is Putative NADPH-dependent 7-cyano-7-deazaguanine reductase from Streptococcus pneumoniae serotype 4 (strain ATCC BAA-334 / TIGR4).